We begin with the raw amino-acid sequence, 91 residues long: Small ribosomal subunit protein bS20 (91 aa).

Residues Met1–Ala23 form a disordered region.

Belongs to the bacterial ribosomal protein bS20 family.

Binds directly to 16S ribosomal RNA. The protein is Small ribosomal subunit protein bS20 of Rhizobium rhizogenes (strain K84 / ATCC BAA-868) (Agrobacterium radiobacter).